Consider the following 617-residue polypeptide: V-type proton ATPase catalytic subunit A (617 aa).

An ATP-binding site is contributed by 257–264; the sequence is GAFGCGKT.

This sequence belongs to the ATPase alpha/beta chains family. V-ATPase is a heteromultimeric enzyme composed of a peripheral catalytic V1 complex (components A to H) attached to an integral membrane V0 proton pore complex (components: a, c, c', c'', d, e, f and VOA1).

The protein localises to the vacuole membrane. It carries out the reaction ATP + H2O + 4 H(+)(in) = ADP + phosphate + 5 H(+)(out). Its function is as follows. Catalytic subunit of the V1 complex of vacuolar(H+)-ATPase (V-ATPase), a multisubunit enzyme composed of a peripheral complex (V1) that hydrolyzes ATP and a membrane integral complex (V0) that translocates protons. V-ATPase is responsible for acidifying and maintaining the pH of intracellular compartments. The chain is V-type proton ATPase catalytic subunit A (VMA1) from Eremothecium gossypii (strain ATCC 10895 / CBS 109.51 / FGSC 9923 / NRRL Y-1056) (Yeast).